Here is a 671-residue protein sequence, read N- to C-terminus: UvrABC system protein C (671 aa).

The GIY-YIG domain occupies 16-95; that stretch reads VEPGVYRFRD…IKEFDPRFNV (80 aa). The UVR domain maps to 208-243; sequence DRLARDMEREMNQAAQELNFERAARLRDNISALQRA. Residues 645–671 are disordered; that stretch reads SSAPSSGATEAVLPAMVENGVDDTPST.

It belongs to the UvrC family. Interacts with UvrB in an incision complex.

The protein resides in the cytoplasm. The UvrABC repair system catalyzes the recognition and processing of DNA lesions. UvrC both incises the 5' and 3' sides of the lesion. The N-terminal half is responsible for the 3' incision and the C-terminal half is responsible for the 5' incision. This chain is UvrABC system protein C, found in Mycobacteroides abscessus (strain ATCC 19977 / DSM 44196 / CCUG 20993 / CIP 104536 / JCM 13569 / NCTC 13031 / TMC 1543 / L948) (Mycobacterium abscessus).